A 326-amino-acid chain; its full sequence is ELMO domain-containing protein 1 (326 aa).

The ELMO domain occupies 133-306 (QHEEMLLKLW…KFRKRIIKQL (174 aa)).

Acts as a GTPase-activating protein (GAP) toward guanine nucleotide exchange factors like ARL2, ARL3, ARF1 and ARF6, but not for GTPases outside the Arf family. In Bos taurus (Bovine), this protein is ELMO domain-containing protein 1 (ELMOD1).